Reading from the N-terminus, the 513-residue chain is MEKLERYSEKRKSRQQYFVYPLLFQEYIYAFAHDYALKGFEPVEIVGYNNKKFSSLLVKRLIIRMYQQNFWINSVNHPNQDRLLDHSNHFYSKFYSQILSEGFAIVLEIPFSLGELSCPGEKEIPKFQNLQSIHSIFPFLEEKFLHLHYLSHIEIPYPIHFEILVQLLEYRIQDVPSLHLLRFFLNYYSNWNSLITSMKSIFLLKKENKRLFRFLYNSYVSEYEFFLLFLRKQSSSLRLISSGTFLERIHFSMKMEHFGVMYPRFFQKTLWFFMDPLMHYVRYQGKAILASKGTLLLKKKWKSYLVNFSQYFLSFWTQPQRIRLNQLRNSCFDFLGYRSSVPINTFLVRNQMLENFFLIDTRMKKLDTTAPATPLIGSLSKAQFCTGLGHPISKPIWTDLSDWDILDRFGRICRNLFHYHSGSSKKQALYQLKYILRLSCARTLARKHKSTVRTFMQRLGSVFLEEFFTEEEQVFSLMFAKTTHFSFHGSHSERIWYFDIIRIDDLVNPLTLN.

This sequence belongs to the intron maturase 2 family. MatK subfamily.

Its subcellular location is the plastid. It is found in the chloroplast. Usually encoded in the trnK tRNA gene intron. Probably assists in splicing its own and other chloroplast group II introns. The sequence is that of Maturase K from Sporobolus indicus (Smut grass).